The following is a 2351-amino-acid chain: Protein FAM186A (2351 aa).

Positions 296-340 form a coiled coil; sequence EAEKELSLKIIRDLSNENEMLQQKLQDAEEKCEQLIRSKIVIEQL. Disordered stretches follow at residues 412–460, 470–489, 505–538, 593–667, 809–838, 868–976, 1805–1837, and 1888–1907; these read ERTP…SWKR, ETSG…SEAK, EMKS…GKSG, QFDD…SEQS, STVQ…SGMS, LQMK…RGLE, GGQS…PGQP, and FQPP…STPG. Residues 433-446 show a composition bias toward basic and acidic residues; sequence DSTKDNVSLKKGDF. Residues 472-484 are compositionally biased toward polar residues; that stretch reads SGPNLSDNKSGQK. Positions 506-520 are enriched in basic and acidic residues; it reads MKSFSEDKSKSPTEA. Residues 527 to 538 show a composition bias toward polar residues; it reads LTETKSQGGKSG. A compositionally biased stretch (basic residues) spans 603-612; the sequence is GKIKGKKHHI. 2 stretches are compositionally biased toward basic and acidic residues: residues 619–632 and 812–823; these read SKEE…ELTK and QKDHKEKEKQRQ. A coiled-coil region spans residues 812–860; that stretch reads QKDHKEKEKQRQEQYLQEGQEQMSGMSLKQQLLGERNLLKEHYEKISEN. A compositionally biased stretch (polar residues) spans 824–838; sequence EQYLQEGQEQMSGMS. Basic and acidic residues-rich tracts occupy residues 901–912, 939–955, and 964–976; these read AEQEEKQKQRGQ, LEKE…EAKH, and KGKE…RGLE. Residues 1816-1835 show a composition bias toward pro residues; sequence PQAPPSPGQLPISRAPPTPG. Residues 1894–1907 are compositionally biased toward polar residues; it reads AEQSPYLQAPSTPG.

This sequence belongs to the FAM186 family.

This is Protein FAM186A (FAM186A) from Homo sapiens (Human).